The sequence spans 1307 residues: Contactin-associated protein like 5-3 (1307 aa).

The first 24 residues, 1 to 24, serve as a signal peptide directing secretion; the sequence is MDFVPRLNSVLTLVLSGLWHFGLT. The Extracellular portion of the chain corresponds to 25–1238; it reads ATNCDNCDDP…PLTNAVLSDS (1214 aa). Positions 31 to 175 constitute an F5/8 type C domain; sequence CDDPLASFLS…IGMRMEVYGC (145 aa). Residues cysteine 31 and cysteine 175 are joined by a disulfide bond. 2 Laminin G-like domains span residues 181–361 and 368–545; these read VADF…TFSC and PITF…IDLC. A glycan (N-linked (GlcNAc...) asparagine) is linked at asparagine 283. An intrachain disulfide couples cysteine 330 to cysteine 361. N-linked (GlcNAc...) asparagine glycosylation is present at asparagine 497. Intrachain disulfides connect cysteine 513–cysteine 545, cysteine 551–cysteine 562, cysteine 556–cysteine 571, and cysteine 573–cysteine 583. The EGF-like 1 domain occupies 547–584; sequence IKDRCLPNYCEHGGHCVQTWTTFYCNCSNTGYTGATCH. One can recognise a Fibrinogen C-terminal domain in the interval 585 to 792; that stretch reads DSIYEQSCEV…LRCYGDRHFW (208 aa). 3 N-linked (GlcNAc...) asparagine glycosylation sites follow: asparagine 600, asparagine 624, and asparagine 637. Positions 793 to 958 constitute a Laminin G-like 3 domain; that stretch reads NAVSFSTEAS…MVTSGVRPGC (166 aa). Disulfide bonds link cysteine 931/cysteine 958, cysteine 962/cysteine 975, cysteine 969/cysteine 984, cysteine 986/cysteine 996, and cysteine 1165/cysteine 1200. Residues 959 to 997 form the EGF-like 2 domain; the sequence is PGHCSSYGNNCHNGGKCVEKHNSYSCDCTKSPYEGPFCQ. The Laminin G-like 4 domain occupies 1019-1200; the sequence is PVSKNTSTSS…VQGSLREFSC (182 aa). A helical membrane pass occupies residues 1239–1259; it reads AVIGGVIAVVTFITFCVIGIM. The Cytoplasmic segment spans residues 1260 to 1307; sequence TRFLYQHKQSHCTSQKKEKEYSENLDSSFRHDIDLQSTTSKCKREYFI.

It belongs to the neurexin family.

The protein localises to the membrane. Functionally, may play a role in the correct development and proper functioning of the peripheral and central nervous system and be involved in cell adhesion and intercellular communication. This Rattus norvegicus (Rat) protein is Contactin-associated protein like 5-3 (Cntnap5c).